Here is a 291-residue protein sequence, read N- to C-terminus: Pyridoxal 5'-phosphate synthase subunit PdxS (291 aa).

Residue aspartate 23 coordinates D-ribose 5-phosphate. Lysine 80 serves as the catalytic Schiff-base intermediate with D-ribose 5-phosphate. Glycine 152 serves as a coordination point for D-ribose 5-phosphate. Position 164 (arginine 164) interacts with D-glyceraldehyde 3-phosphate. D-ribose 5-phosphate is bound by residues glycine 213 and 234–235 (GS).

This sequence belongs to the PdxS/SNZ family. As to quaternary structure, in the presence of PdxT, forms a dodecamer of heterodimers.

The enzyme catalyses aldehydo-D-ribose 5-phosphate + D-glyceraldehyde 3-phosphate + L-glutamine = pyridoxal 5'-phosphate + L-glutamate + phosphate + 3 H2O + H(+). It functions in the pathway cofactor biosynthesis; pyridoxal 5'-phosphate biosynthesis. Functionally, catalyzes the formation of pyridoxal 5'-phosphate from ribose 5-phosphate (RBP), glyceraldehyde 3-phosphate (G3P) and ammonia. The ammonia is provided by the PdxT subunit. Can also use ribulose 5-phosphate and dihydroxyacetone phosphate as substrates, resulting from enzyme-catalyzed isomerization of RBP and G3P, respectively. In Clostridium acetobutylicum (strain ATCC 824 / DSM 792 / JCM 1419 / IAM 19013 / LMG 5710 / NBRC 13948 / NRRL B-527 / VKM B-1787 / 2291 / W), this protein is Pyridoxal 5'-phosphate synthase subunit PdxS.